The following is a 204-amino-acid chain: Large ribosomal subunit protein uL22m (204 aa).

The N-terminal 27 residues, 1–27 (MAASITASVWGTLLKIHRGLTASGCLP), are a transit peptide targeting the mitochondrion.

This sequence belongs to the universal ribosomal protein uL22 family. Component of the mitochondrial ribosome large subunit (39S) which comprises a 16S rRNA and about 50 distinct proteins.

It is found in the mitochondrion. This Xenopus tropicalis (Western clawed frog) protein is Large ribosomal subunit protein uL22m (mrpl22).